Reading from the N-terminus, the 204-residue chain is TPR repeat-containing protein RHE_CH03534.1 (204 aa).

Positions 1-29 (MSAMRLFALTSAMLPLAFILSTSPFPATA) are cleaved as a signal peptide. TPR repeat units follow at residues 84-117 (INLL…KPDY), 118-151 (AESW…EPRH), and 153-185 (GALS…YPAD).

This is TPR repeat-containing protein RHE_CH03534.1 from Rhizobium etli (strain ATCC 51251 / DSM 11541 / JCM 21823 / NBRC 15573 / CFN 42).